Reading from the N-terminus, the 176-residue chain is uncharacterized protein (176 aa).

This is an uncharacterized protein from Treponema pallidum (strain Nichols).